The primary structure comprises 71 residues: Small, acid-soluble spore protein I (71 aa).

It belongs to the SspI family.

The protein resides in the spore core. This is Small, acid-soluble spore protein I from Bacillus velezensis (strain DSM 23117 / BGSC 10A6 / LMG 26770 / FZB42) (Bacillus amyloliquefaciens subsp. plantarum).